The chain runs to 717 residues: MASSSDSEDDSVMAVDQEETALEGTMEQDEDPHPVLEVEETRHNRSMSELPEEVLEYILSFLSPYQEHKTAALVCKQWYRLIKGVAHQCYHGFMKAVQEGNIQWESRTYPYPGTPITQRFSHSACYYDANQSMYVFGGCTQSSCNAAFNDLWRLDLNSKEWIRPLASGSYPSPKAGATLVVYKDLLVLFGGWTRPSPYPLHQPERFFDEIHTYSPSKNWWNCIVTTHGPPPMAGHSSCVIGDKMIVFGGSLGSRQMSNEVWVLDLEQWAWSKPNISGPSPHPRGGQSQIVIDDTTLLILGGCGGPNALFKDAWLLHMHPGPWAWQPLKVENEDHGAPELWCHPACRVGQCVVVFSQAPSGRAPLSPSLNSRPSPISATPPALVPETREYRSQSPVRSMDEAPCVNGRWGTLRPRAQRQTPSGSREGSLSPARGDGSPILNGGNLSPGTVAVGGASLDSPVQVVSPSTPSASDGYDLKVGLSLAPRRGSLPDQKDLRLSSIDLNWDLKSASSSSHVDSIDNRTVAGSVRHPPEQTNGVHTPPHVASALAGAVSPGALRRSLEAIKAMSSKGPSASAALSPPLGSSPSSPGSQSLSSGETVPNSRPGPAQGDGHSLPPIARRLGHHPPQSLNVGKPLYQSMNCKPMQMYVLDIKDTKEKGRVKWKVFTSSSVVGPPETSLHTVVQGRGELIVFGGLMDKKQNVKYYPKTNALYFVRAKR.

Over residues Met-1–Glu-30 the composition is skewed to acidic residues. The segment at Met-1 to Pro-34 is disordered. The F-box domain maps to Asn-44–Phe-93. 4 Kelch repeats span residues Ser-132–Asp-184, Leu-186–Asp-242, Met-244–Asp-293, and Thr-295–His-342. Residues Arg-361–Gly-452 are disordered. Low complexity predominate over residues Pro-363–Ser-376. Phosphoserine occurs at positions 365 and 373. Thr-378 is modified (phosphothreonine). Positions Gln-416 to Gly-426 are enriched in polar residues. Ser-552 carries the post-translational modification Phosphoserine. A compositionally biased stretch (low complexity) spans Gly-570 to Ser-595. The segment at Gly-570–Gly-632 is disordered.

Component of some SCF complex, composed of CUL1, SKP1, RBX1 and FBXO42. Interacts (via the kelch domain) with p53/TP53; interaction is direct.

Its function is as follows. Substrate-recognition component of some SCF (SKP1-CUL1-F-box protein)-type E3 ubiquitin ligase complex. Specifically recognizes p53/TP53, promoting its ubiquitination and degradation. This Mus musculus (Mouse) protein is F-box only protein 42 (Fbxo42).